Here is a 339-residue protein sequence, read N- to C-terminus: ADP,ATP carrier protein (339 aa).

Solcar repeat units follow at residues 39-133 (MAFV…IKGL), 145-234 (RFFV…AKGV), and 246-328 (AKWA…IKKF). Transmembrane regions (helical) follow at residues 41 to 70 (FVKD…LLLQ), 110 to 134 (LANV…KGLF), 144 to 164 (WRFF…SLLI), 212 to 232 (VSVQ…DTAK), and 245 to 265 (FAKW…SYPF). Residues Arg115 and Lys127 each coordinate ADP. ADP is bound at residue Arg269. Positions 269 to 274 (RRRLMM) are important for transport activity. The short motif at 269–274 (RRRLMM) is the Nucleotide carrier signature motif element. A helical membrane pass occupies residues 305–322 (AWSNVLRGAGGAFVLVLY).

Belongs to the mitochondrial carrier (TC 2.A.29) family. In terms of assembly, monomer.

The protein localises to the mitochondrion inner membrane. It carries out the reaction ADP(in) + ATP(out) = ADP(out) + ATP(in). Its activity is regulated as follows. The matrix-open state (m-state) is inhibited by the membrane-permeable bongkrekic acid (BKA). The cytoplasmic-open state (c-state) is inhibited by the membrane-impermeable toxic inhibitor carboxyatractyloside (CATR). Its function is as follows. ADP:ATP antiporter that mediates import of ADP into the mitochondrial matrix for ATP synthesis, and export of ATP out to fuel the cell. Cycles between the cytoplasmic-open state (c-state) and the matrix-open state (m-state): operates by the alternating access mechanism with a single substrate-binding site intermittently exposed to either the cytosolic (c-state) or matrix (m-state) side of the inner mitochondrial membrane. The protein is ADP,ATP carrier protein of Parachlorella kessleri (Green alga).